We begin with the raw amino-acid sequence, 160 residues long: SsrA-binding protein (160 aa).

This sequence belongs to the SmpB family.

The protein localises to the cytoplasm. Required for rescue of stalled ribosomes mediated by trans-translation. Binds to transfer-messenger RNA (tmRNA), required for stable association of tmRNA with ribosomes. tmRNA and SmpB together mimic tRNA shape, replacing the anticodon stem-loop with SmpB. tmRNA is encoded by the ssrA gene; the 2 termini fold to resemble tRNA(Ala) and it encodes a 'tag peptide', a short internal open reading frame. During trans-translation Ala-aminoacylated tmRNA acts like a tRNA, entering the A-site of stalled ribosomes, displacing the stalled mRNA. The ribosome then switches to translate the ORF on the tmRNA; the nascent peptide is terminated with the 'tag peptide' encoded by the tmRNA and targeted for degradation. The ribosome is freed to recommence translation, which seems to be the essential function of trans-translation. This is SsrA-binding protein from Pectobacterium atrosepticum (strain SCRI 1043 / ATCC BAA-672) (Erwinia carotovora subsp. atroseptica).